Here is a 735-residue protein sequence, read N- to C-terminus: Glycogen [starch] synthase, muscle (735 aa).

At serine 8 the chain carries Phosphoserine; by AMPK and PKA. Serine 11 carries the phosphoserine modification. Position 39 (lysine 39) interacts with UDP. Positions 205 and 211 each coordinate UDP-alpha-D-glucose. 5 residues coordinate alpha-D-glucose 6-phosphate: histidine 291, glutamate 292, glutamine 294, histidine 297, and lysine 301. Arginine 331 is a UDP binding site. Arginine 331 provides a ligand contact to UDP-alpha-D-glucose. Serine 412 is modified (phosphoserine). Histidine 501 provides a ligand contact to alpha-D-glucose 6-phosphate. UDP-alpha-D-glucose contacts are provided by glutamate 510, tryptophan 512, and glycine 513. Threonine 515 contacts UDP. Alpha-D-glucose 6-phosphate is bound by residues arginine 582 and arginine 586. The disordered stretch occupies residues 629-735 (DATQGYRYPR…PASSLGEERN (107 aa)). A Phosphoserine; by DYRK2, GSK3-alpha, GSK3-beta and PASK modification is found at serine 641. Serine 645 and serine 649 each carry phosphoserine; by GSK3-alpha and GSK3-beta. Serine 652 is modified (phosphoserine). Serine 653 is modified (phosphoserine; by GSK3-alpha and GSK3-beta). The residue at position 657 (serine 657) is a Phosphoserine; by CK2. The segment covering 658-681 (EDEEEPRDGLPEEDGERYDEDEEA) has biased composition (acidic residues). Positions 682-695 (AKDRRNIRAPEWPR) are enriched in basic and acidic residues. Phosphoserine is present on serine 698. The segment covering 698-735 (SCTSSSGGSKRSNSVDTSSLSTPSEPLSPASSLGEERN) has biased composition (low complexity). Position 700 is a phosphothreonine (threonine 700). A phosphoserine mark is found at serine 709 and serine 711. Threonine 719 carries the post-translational modification Phosphothreonine. 2 positions are modified to phosphoserine: serine 725 and serine 729.

Belongs to the glycosyltransferase 3 family. Part of the GYS1-GYG1 complex, a heterooctamer composed of a tetramer of GYS1 and 2 dimers of GYG1, where each GYS1 protomer binds to one GYG1 subunit (via GYG1 C-terminus); the GYS1 tetramer may dissociate from GYG1 dimers to continue glycogen polymerization on its own. Post-translationally, phosphorylation at Ser-8 is required for modification of Ser-11 by casein kinase I. In terms of processing, phosphorylated at Ser-641 by PASK, leading to inactivation; phosphorylation by PASK is inhibited by glycogen. Dephosphorylation at Ser-641 and Ser-645 by PP1 activates the enzyme. Phosphorylation at Ser-8 by AMPK inactivates the enzyme activity. Phosphorylated at Ser-641 by DYRK2, leading to inactivation. Primed phosphorylation at Ser-657 (site 5) by CSNK2A1 and CSNK2A2 is required for inhibitory phosphorylation at Ser-641 (site 3a), Ser-645 (site 3b), Ser-649 (site 3c) and Ser-653 (site 4) by GSK3A and GSK3B.

It catalyses the reaction [(1-&gt;4)-alpha-D-glucosyl](n) + UDP-alpha-D-glucose = [(1-&gt;4)-alpha-D-glucosyl](n+1) + UDP + H(+). The protein operates within glycan biosynthesis; glycogen biosynthesis. With respect to regulation, allosteric activation by glucose-6-phosphate. Phosphorylation reduces the activity towards UDP-glucose. When in the non-phosphorylated state, glycogen synthase does not require glucose-6-phosphate as an allosteric activator; when phosphorylated it does. Its function is as follows. Glycogen synthase participates in the glycogen biosynthetic process along with glycogenin and glycogen branching enzyme. Extends the primer composed of a few glucose units formed by glycogenin by adding new glucose units to it. In this context, glycogen synthase transfers the glycosyl residue from UDP-Glc to the non-reducing end of alpha-1,4-glucan. In Oryctolagus cuniculus (Rabbit), this protein is Glycogen [starch] synthase, muscle.